The sequence spans 161 residues: MGCCYSSENEDSDQDQEERKLLLDPSNTPTKALNGAEPSYHSLPSARTDEQALLSSILAKTASNIIDVSAADSQGMEQHEYMDRARQYSTRLAVLSSSLTHWKKLPPLPSLTSQPHQVLASEPIPFSDLQQVSRIAAYAYSALSQIRVDAKEELVVQFGIP.

Residues 1 to 43 (MGCCYSSENEDSDQDQEERKLLLDPSNTPTKALNGAEPSYHSL) are disordered. Gly-2 carries N-myristoyl glycine lipidation. 2 S-palmitoyl cysteine lipidation sites follow: Cys-3 and Cys-4. Lys-20 is covalently cross-linked (Glycyl lysine isopeptide (Lys-Gly) (interchain with G-Cter in ubiquitin)). Thr-28 carries the phosphothreonine modification. Lys-31 participates in a covalent cross-link: Glycyl lysine isopeptide (Lys-Gly) (interchain with G-Cter in ubiquitin). A phosphoserine mark is found at Ser-42 and Ser-56. Residue Lys-60 forms a Glycyl lysine isopeptide (Lys-Gly) (interchain with G-Cter in ubiquitin) linkage. Position 98 is a phosphoserine (Ser-98). Glycyl lysine isopeptide (Lys-Gly) (interchain with G-Cter in ubiquitin) cross-links involve residues Lys-103 and Lys-104. The interval 121 to 161 (SEPIPFSDLQQVSRIAAYAYSALSQIRVDAKEELVVQFGIP) is interaction with LAMTOR2 and LAMTOR3. Ser-141 carries the post-translational modification Phosphoserine.

Belongs to the LAMTOR1 family. Part of the Ragulator complex composed of LAMTOR1, LAMTOR2, LAMTOR3, LAMTOR4 and LAMTOR5. LAMTOR4 and LAMTOR5 form a heterodimer that interacts, through LAMTOR1, with a LAMTOR2, LAMTOR3 heterodimer. Interacts with LAMTOR2 and LAMTOR3; the interaction is direct. The Ragulator complex interacts with both the mTORC1 complex and heterodimers constituted of the Rag GTPases RagA/RRAGA, RagB/RRAGB, RagC/RRAGC and RagD/RRAGD; regulated by amino acid availability. The Ragulator complex interacts with SLC38A9; the probable amino acid sensor. Component of the lysosomal folliculin complex (LFC), composed of FLCN, FNIP1 (or FNIP2), RagA/RRAGA or RagB/RRAGB GDP-bound, RagC/RRAGC or RagD/RRAGD GTP-bound, and Ragulator. Associates with the lysosomal V-ATPase complex; interaction promotes the guanine nucleotide exchange factor (GEF) of the Ragulator complex. Interacts with MMP14. Interacts with CDKN1B; prevents the interaction of CDKN1B with RHOA leaving RHOA in a form accessible to activation by ARHGEF2. Interacts with PIP4P1. Post-translationally, N-terminal myristoylation and palmitoylation mediates its recruitment to lysosome membranes, thereby promoting localization of the Ragulator complex to lysosomes. N-myristoylation by NMT1 is required for palmitoylation at Cys-3 and Cys-4. May be palmitoylated by ZDHHC3. Ubiquitinated at Lys-60, Lys-103 and Lys-104 by UBE3A, promoting its degradation by the proteasome. Ubiquitination at Lys-20 impairs the association with the lysosomal V-ATPase complex. Deubiquitination at Lys-20 by USP32 promotes the association with the lysosomal V-ATPase complex and subsequent activation of the mTORC1 complex. In terms of tissue distribution, ubiquitously expressed.

Its subcellular location is the lysosome membrane. It localises to the late endosome membrane. In terms of biological role, key component of the Ragulator complex, a multiprotein complex involved in amino acid sensing and activation of mTORC1, a signaling complex promoting cell growth in response to growth factors, energy levels, and amino acids. Activated by amino acids through a mechanism involving the lysosomal V-ATPase, the Ragulator plays a dual role for the small GTPases Rag (RagA/RRAGA, RagB/RRAGB, RagC/RRAGC and/or RagD/RRAGD): it (1) acts as a guanine nucleotide exchange factor (GEF), activating the small GTPases Rag and (2) mediates recruitment of Rag GTPases to the lysosome membrane. Activated Ragulator and Rag GTPases function as a scaffold recruiting mTORC1 to lysosomes where it is in turn activated. LAMTOR1 is directly responsible for anchoring the Ragulator complex to the lysosomal membrane. LAMTOR1 wraps around the other subunits of the Ragulator complex to hold them in place and interacts with the Rag GTPases, thereby playing a key role in the recruitment of the mTORC1 complex to lysosomes. Also involved in the control of embryonic stem cells differentiation via non-canonical RagC/RRAGC and RagD/RRAGD activation: together with FLCN, it is necessary to recruit and activate RagC/RRAGC and RagD/RRAGD at the lysosomes, and to induce exit of embryonic stem cells from pluripotency via non-canonical, mTOR-independent TFE3 inactivation. Also required for late endosomes/lysosomes biogenesis it may regulate both the recycling of receptors through endosomes and the MAPK signaling pathway through recruitment of some of its components to late endosomes. May be involved in cholesterol homeostasis regulating LDL uptake and cholesterol release from late endosomes/lysosomes. May also play a role in RHOA activation. In Rattus norvegicus (Rat), this protein is Ragulator complex protein LAMTOR1 (Lamtor1).